A 442-amino-acid polypeptide reads, in one-letter code: Histidinol dehydrogenase (442 aa).

NAD(+)-binding residues include Tyr-136, Gln-197, and Asn-220. Positions 243, 265, and 268 each coordinate substrate. Gln-265 and His-268 together coordinate Zn(2+). Catalysis depends on proton acceptor residues Glu-333 and His-334. His-334, Asp-367, Glu-421, and His-426 together coordinate substrate. Position 367 (Asp-367) interacts with Zn(2+). His-426 contacts Zn(2+).

The protein belongs to the histidinol dehydrogenase family. It depends on Zn(2+) as a cofactor.

It carries out the reaction L-histidinol + 2 NAD(+) + H2O = L-histidine + 2 NADH + 3 H(+). It functions in the pathway amino-acid biosynthesis; L-histidine biosynthesis; L-histidine from 5-phospho-alpha-D-ribose 1-diphosphate: step 9/9. Functionally, catalyzes the sequential NAD-dependent oxidations of L-histidinol to L-histidinaldehyde and then to L-histidine. In Pseudomonas fluorescens (strain ATCC BAA-477 / NRRL B-23932 / Pf-5), this protein is Histidinol dehydrogenase.